Reading from the N-terminus, the 80-residue chain is Large ribosomal subunit protein eL38 (80 aa).

This sequence belongs to the eukaryotic ribosomal protein eL38 family. As to quaternary structure, component of the large ribosomal subunit (LSU). Mature N.crassa ribosomes consist of a small (40S) and a large (60S) subunit. The 40S small subunit contains 1 molecule of ribosomal RNA (18S rRNA) and at least 32 different proteins. The large 60S subunit contains 3 rRNA molecules (26S, 5.8S and 5S rRNA) and at least 42 different proteins.

The protein resides in the cytoplasm. Functionally, component of the ribosome, a large ribonucleoprotein complex responsible for the synthesis of proteins in the cell. The small ribosomal subunit (SSU) binds messenger RNAs (mRNAs) and translates the encoded message by selecting cognate aminoacyl-transfer RNA (tRNA) molecules. The large subunit (LSU) contains the ribosomal catalytic site termed the peptidyl transferase center (PTC), which catalyzes the formation of peptide bonds, thereby polymerizing the amino acids delivered by tRNAs into a polypeptide chain. The nascent polypeptides leave the ribosome through a tunnel in the LSU and interact with protein factors that function in enzymatic processing, targeting, and the membrane insertion of nascent chains at the exit of the ribosomal tunnel. The sequence is that of Large ribosomal subunit protein eL38 (rpl-38) from Neurospora crassa (strain ATCC 24698 / 74-OR23-1A / CBS 708.71 / DSM 1257 / FGSC 987).